A 244-amino-acid chain; its full sequence is ATP-dependent Clp protease ATP-binding subunit CLPT4, chloroplastic (244 aa).

The transit peptide at 1-64 (MQALQASRLT…WRSSGRVITR (64 aa)) directs the protein to the chloroplast. Over residues 30–48 (SRPISSGVSSSQELSSRSS) the composition is skewed to low complexity. 2 disordered regions span residues 30–55 (SRPISSGVSSSQELSSRSSAPATKSW) and 220–244 (GRRYQLPDETEEAGPLKSEDDVSFL).

It belongs to the ClpA/ClpB family.

The protein localises to the plastid. The protein resides in the chloroplast. Functionally, accessory protein regulating the assembly of the plastid Clp protease system. This is ATP-dependent Clp protease ATP-binding subunit CLPT4, chloroplastic from Chlamydomonas reinhardtii (Chlamydomonas smithii).